The primary structure comprises 279 residues: NADPH-dependent 7-cyano-7-deazaguanine reductase (279 aa).

86–88 (IES) is a binding site for substrate. 88–89 (SK) is an NADPH binding site. C187 acts as the Thioimide intermediate in catalysis. D194 serves as the catalytic Proton donor. Residue 226–227 (HE) participates in substrate binding. 255 to 256 (RG) contacts NADPH.

It belongs to the GTP cyclohydrolase I family. QueF type 2 subfamily. As to quaternary structure, homodimer.

It is found in the cytoplasm. The enzyme catalyses 7-aminomethyl-7-carbaguanine + 2 NADP(+) = 7-cyano-7-deazaguanine + 2 NADPH + 3 H(+). It functions in the pathway tRNA modification; tRNA-queuosine biosynthesis. Functionally, catalyzes the NADPH-dependent reduction of 7-cyano-7-deazaguanine (preQ0) to 7-aminomethyl-7-deazaguanine (preQ1). The polypeptide is NADPH-dependent 7-cyano-7-deazaguanine reductase (Haemophilus influenzae (strain PittEE)).